The primary structure comprises 1447 residues: Baculoviral IAP repeat-containing protein 1b (1447 aa).

BIR repeat units follow at residues 60 to 127 (EAKR…CEFL), 159 to 227 (EEAR…CEFL), and 278 to 345 (EELR…CVFL). Zn(2+)-binding residues include Cys-315, Cys-318, His-335, and Cys-342. An NACHT domain is found at 508–802 (SVMCVEGEAG…EFLAAVRLTE (295 aa)). Residue Lys-520 coordinates ATP.

In terms of assembly, component of the NLRC4 inflammasome, at least composed of NLRC4, caspase-1 (CASP1) and some NAIP protein. Interacts with S.typhimurium (Salmonella) PrgJ and B.thailandensis BsaK.

Sensor component of the NLRC4 inflammasome that specifically recognizes and binds type III secretion system (T3SS) rod proteins such as S.typhimurium (Salmonella) PrgJ and B.thailandensis BsaK from pathogenic bacteria. Association of pathogenic bacteria proteins drives in turn drive assembly and activation of the NLRC4 inflammasome, promoting caspase-1 activation, cytokine production and macrophage pyroptosis. The NLRC4 inflammasome is activated as part of the innate immune response to a range of intracellular bacteria. The NLRC4 inflammasome senses Gram-negative bacteria such as L.pneumophila and P.aeruginosa, enteric pathogens S.typhimurium (Salmonella) and S.flexneri. Prevents motor-neuron apoptosis induced by a variety of signals. The sequence is that of Baculoviral IAP repeat-containing protein 1b (Naip2) from Mus musculus (Mouse).